We begin with the raw amino-acid sequence, 568 residues long: Sulfite reductase [NADPH] hemoprotein beta-component (568 aa).

Cys-425, Cys-431, Cys-470, and Cys-474 together coordinate [4Fe-4S] cluster. Cys-474 contacts siroheme.

Belongs to the nitrite and sulfite reductase 4Fe-4S domain family. Alpha(8)-beta(8). The alpha component is a flavoprotein, the beta component is a hemoprotein. Siroheme is required as a cofactor. The cofactor is [4Fe-4S] cluster.

The catalysed reaction is hydrogen sulfide + 3 NADP(+) + 3 H2O = sulfite + 3 NADPH + 4 H(+). The protein operates within sulfur metabolism; hydrogen sulfide biosynthesis; hydrogen sulfide from sulfite (NADPH route): step 1/1. In terms of biological role, component of the sulfite reductase complex that catalyzes the 6-electron reduction of sulfite to sulfide. This is one of several activities required for the biosynthesis of L-cysteine from sulfate. This Xanthomonas campestris pv. campestris (strain B100) protein is Sulfite reductase [NADPH] hemoprotein beta-component.